We begin with the raw amino-acid sequence, 425 residues long: Protein translocase subunit SecY (425 aa).

10 helical membrane-spanning segments follow: residues 15-35 (LLSLGILLFIRMGTFLPVPGI), 62-82 (TVVVGLFTLNIFPYINASIIM), 113-131 (LLTLGWSLIQSTSVAFYLK), 139-159 (LVLAFEIVIWLTTGAMIVLWL), 168-188 (LGNGPSLLIYTNIVSSLPGFV), 201-221 (IGSWLLSGFVLFVALYGIVLL), 266-286 (PIILTTAVLVIPTFIYNLGLL), 304-324 (IIYWVSYFVLILLFSLFYSTI), 364-384 (LLGAIMLALLATLPNIIQAIL), and 385-405 (SLSGFTNLGTTSLLILVGVIL).

Belongs to the SecY/SEC61-alpha family. As to quaternary structure, component of the plastid Sec protein translocase complex, which is composed of at least SecY, SecE and SecG.

It localises to the plastid. Its subcellular location is the chloroplast thylakoid membrane. The central subunit of the protein translocation channel SecYE. Consists of two halves formed by TMs 1-5 and 6-10. These two domains form a lateral gate at the front which open onto the bilayer between TMs 2 and 7, and are clamped together by SecE at the back. The channel is closed by both a pore ring composed of hydrophobic SecY resides and a short helix (helix 2A) on the extracellular side of the membrane which forms a plug. This chain is Protein translocase subunit SecY, found in Trieres chinensis (Marine centric diatom).